The primary structure comprises 254 residues: Putative epimerase LsrE (254 aa).

Residues 14–34 (VALLASYPLSVGILAGQWIAL) traverse the membrane as a helical segment. A divalent metal cation-binding residues include H50, D52, and H81. Residue D52 is the Proton acceptor of the active site. Residues H81, 166 to 169 (GYGS), 199 to 201 (DGS), and 221 to 222 (GS) each bind substrate. D199 is a binding site for a divalent metal cation. D199 (proton donor) is an active-site residue.

This sequence belongs to the ribulose-phosphate 3-epimerase family. The cofactor is a divalent metal cation.

It is found in the cell membrane. The protein is Putative epimerase LsrE (lsrE) of Salmonella typhi.